The sequence spans 77 residues: Tachyplesin-1 (77 aa).

An N-terminal signal peptide occupies residues 1–23 (MKKLVIALCLMMVLAVMVEEAEA). 2 cysteine pairs are disulfide-bonded: cysteine 26–cysteine 39 and cysteine 30–cysteine 35. Position 40 is an arginine amide (arginine 40). A propeptide spanning residues 41 to 77 (GKRNEVRQYRDRGYDVRAIPEETFFTRQDEDEDDDEE) is cleaved from the precursor.

This sequence belongs to the tachyplesin/polyphemusin family. In terms of tissue distribution, hemocytes.

It localises to the secreted. Its function is as follows. Significantly inhibits the growth of Gram-negative and Gram-positive bacteria. The protein is Tachyplesin-1 of Tachypleus tridentatus (Japanese horseshoe crab).